A 343-amino-acid polypeptide reads, in one-letter code: Probable dual-specificity RNA methyltransferase RlmN (343 aa).

The active-site Proton acceptor is glutamate 94. One can recognise a Radical SAM core domain in the interval tyrosine 100 to aspartate 330. Residues cysteine 107 and cysteine 335 are joined by a disulfide bond. Residues cysteine 114, cysteine 118, and cysteine 121 each contribute to the [4Fe-4S] cluster site. S-adenosyl-L-methionine-binding positions include glycine 161–glutamate 162, serine 193, serine 216–histidine 218, and asparagine 292. The active-site S-methylcysteine intermediate is the cysteine 335.

The protein belongs to the radical SAM superfamily. RlmN family. [4Fe-4S] cluster is required as a cofactor.

Its subcellular location is the cytoplasm. It carries out the reaction adenosine(2503) in 23S rRNA + 2 reduced [2Fe-2S]-[ferredoxin] + 2 S-adenosyl-L-methionine = 2-methyladenosine(2503) in 23S rRNA + 5'-deoxyadenosine + L-methionine + 2 oxidized [2Fe-2S]-[ferredoxin] + S-adenosyl-L-homocysteine. It catalyses the reaction adenosine(37) in tRNA + 2 reduced [2Fe-2S]-[ferredoxin] + 2 S-adenosyl-L-methionine = 2-methyladenosine(37) in tRNA + 5'-deoxyadenosine + L-methionine + 2 oxidized [2Fe-2S]-[ferredoxin] + S-adenosyl-L-homocysteine. Specifically methylates position 2 of adenine 2503 in 23S rRNA and position 2 of adenine 37 in tRNAs. The sequence is that of Probable dual-specificity RNA methyltransferase RlmN from Clostridioides difficile (strain 630) (Peptoclostridium difficile).